The chain runs to 678 residues: Probable metal-nicotianamine transporter YSL6 (678 aa).

The next 14 helical transmembrane spans lie at 41–61 (VTVR…LITH), 65–85 (LTVG…YFLV), 113–133 (CVVA…MLAM), 158–178 (LGWM…SLVA), 226–246 (ISFF…SCGF), 279–299 (IVNC…WPYI), 324–344 (VFIS…KIIY), 394–414 (LAGS…PMIF), 419–439 (WYLV…NSYG), 467–487 (GGVI…STAA), 512–532 (IGTT…WTAF), 561–581 (SALP…AILI), 606–626 (FYIG…LFVW), and 641–661 (IASG…ILSI).

This sequence belongs to the YSL (TC 2.A.67.2) family. Expressed in roots and leaves.

The protein resides in the membrane. Its function is as follows. May be involved in the transport of nicotianamine-chelated metals. This Oryza sativa subsp. japonica (Rice) protein is Probable metal-nicotianamine transporter YSL6 (YSL6).